Here is a 200-residue protein sequence, read N- to C-terminus: Potassium-transporting ATPase KdpC subunit (200 aa).

A helical membrane pass occupies residues 6-26 (PALVLLILLTLITGIAYPLLT).

It belongs to the KdpC family. In terms of assembly, the system is composed of three essential subunits: KdpA, KdpB and KdpC.

The protein resides in the cell inner membrane. Its function is as follows. Part of the high-affinity ATP-driven potassium transport (or Kdp) system, which catalyzes the hydrolysis of ATP coupled with the electrogenic transport of potassium into the cytoplasm. This subunit acts as a catalytic chaperone that increases the ATP-binding affinity of the ATP-hydrolyzing subunit KdpB by the formation of a transient KdpB/KdpC/ATP ternary complex. This is Potassium-transporting ATPase KdpC subunit from Yersinia pseudotuberculosis serotype O:1b (strain IP 31758).